A 297-amino-acid polypeptide reads, in one-letter code: N-acetylneuraminate lyase (297 aa).

Aceneuramate is bound by residues Ser47 and Thr48. Tyr137 (proton donor) is an active-site residue. Lys165 functions as the Schiff-base intermediate with substrate in the catalytic mechanism. The aceneuramate site is built by Thr167, Gly189, Asp191, Glu192, and Ser208.

This sequence belongs to the DapA family. NanA subfamily. Homotetramer.

The protein resides in the cytoplasm. The enzyme catalyses aceneuramate = aldehydo-N-acetyl-D-mannosamine + pyruvate. Its pathway is amino-sugar metabolism; N-acetylneuraminate degradation; D-fructose 6-phosphate from N-acetylneuraminate: step 1/5. Functionally, catalyzes the reversible aldol cleavage of N-acetylneuraminic acid (sialic acid; Neu5Ac) to form pyruvate and N-acetylmannosamine (ManNAc) via a Schiff base intermediate. The protein is N-acetylneuraminate lyase of Salmonella typhimurium (strain LT2 / SGSC1412 / ATCC 700720).